The following is a 345-amino-acid chain: S-adenosylmethionine:tRNA ribosyltransferase-isomerase (345 aa).

The protein belongs to the QueA family. In terms of assembly, monomer.

The protein resides in the cytoplasm. It carries out the reaction 7-aminomethyl-7-carbaguanosine(34) in tRNA + S-adenosyl-L-methionine = epoxyqueuosine(34) in tRNA + adenine + L-methionine + 2 H(+). Its pathway is tRNA modification; tRNA-queuosine biosynthesis. In terms of biological role, transfers and isomerizes the ribose moiety from AdoMet to the 7-aminomethyl group of 7-deazaguanine (preQ1-tRNA) to give epoxyqueuosine (oQ-tRNA). This is S-adenosylmethionine:tRNA ribosyltransferase-isomerase from Shewanella sp. (strain ANA-3).